Reading from the N-terminus, the 850-residue chain is Pentatricopeptide repeat-containing protein At5g16860 (850 aa).

PPR repeat units lie at residues T58–S88, G91–P125, D126–S160, N161–W191, D192–P227, D228–Q262, N263–K293, D294–M328, D329–P363, N364–L398, E406–K436, D439–T473, N476–A510, P512–K542, N543–L577, D578–V608, and G614–E644. The segment at V649–I724 is type E motif. Residues K725 to K755 are type E(+) motif. A type DYW motif region spans residues D756–W850.

Belongs to the PPR family. PCMP-H subfamily.

This chain is Pentatricopeptide repeat-containing protein At5g16860 (PCMP-H92), found in Arabidopsis thaliana (Mouse-ear cress).